The chain runs to 185 residues: MKMEIHKNLEEKMNKTINALKDELASIRAGRANPAMLDRIVVEYYGSPTPIKQIAAITAPEPRIISIQPYDGSALSSIEKAILQSDLGVNPSNDGKLIRIIVPQLTEERRKELTKVAKKTSEDAKVVLRNERRNANDRLKKMQKDNEITEDELKTAQDEVQKITDKFIKMVDELTEKKEKDIMEV.

It belongs to the RRF family.

The protein localises to the cytoplasm. Functionally, responsible for the release of ribosomes from messenger RNA at the termination of protein biosynthesis. May increase the efficiency of translation by recycling ribosomes from one round of translation to another. This Alkaliphilus oremlandii (strain OhILAs) (Clostridium oremlandii (strain OhILAs)) protein is Ribosome-recycling factor.